The following is a 387-amino-acid chain: Succinate--CoA ligase [ADP-forming] subunit beta (387 aa).

An ATP-grasp domain is found at 9–245 (KDLLESYGLK…KSQENAKELK (237 aa)). ATP is bound by residues Lys-46, 53-55 (GRG), Glu-100, Tyr-103, and Glu-108. Mg(2+) contacts are provided by Asn-200 and Asp-214. Substrate-binding positions include Asn-265 and 322–324 (GIV).

This sequence belongs to the succinate/malate CoA ligase beta subunit family. Heterotetramer of two alpha and two beta subunits. Requires Mg(2+) as cofactor.

The catalysed reaction is succinate + ATP + CoA = succinyl-CoA + ADP + phosphate. The enzyme catalyses GTP + succinate + CoA = succinyl-CoA + GDP + phosphate. The protein operates within carbohydrate metabolism; tricarboxylic acid cycle; succinate from succinyl-CoA (ligase route): step 1/1. Its function is as follows. Succinyl-CoA synthetase functions in the citric acid cycle (TCA), coupling the hydrolysis of succinyl-CoA to the synthesis of either ATP or GTP and thus represents the only step of substrate-level phosphorylation in the TCA. The beta subunit provides nucleotide specificity of the enzyme and binds the substrate succinate, while the binding sites for coenzyme A and phosphate are found in the alpha subunit. This chain is Succinate--CoA ligase [ADP-forming] subunit beta, found in Francisella tularensis subsp. novicida (strain U112).